Consider the following 733-residue polypeptide: Serine/threonine-protein kinase ATG1c (733 aa).

One can recognise a Protein kinase domain in the interval 12–269 (YLVGRQIGSG…FEEFFNHPFL (258 aa)). ATP is bound by residues 18–26 (IGSGSFSVV) and K41. D134 (proton acceptor) is an active-site residue. 2 disordered regions span residues 292-363 (SSGS…ELTS) and 379-414 (FETQ…SQDS). Residues 329-339 (KKTSSMKSSSG) are compositionally biased toward polar residues. Basic and acidic residues-rich tracts occupy residues 342–360 (VDTR…KHTE) and 379–393 (FETQ…RREP). An AIM (Atg8-family-interacting motif) motif is present at residues 419–422 (FVLV). Disordered regions lie at residues 565–596 (GSPS…SHDG) and 713–733 (HRRS…NRQS). Over residues 566–577 (SPSQDINKLRSS) the composition is skewed to polar residues. Basic and acidic residues predominate over residues 579–596 (LKHDTHSSNKVTDLSHDG). The span at 717–733 (SAGQMQGSSLAMMNRQS) shows a compositional bias: polar residues.

Belongs to the protein kinase superfamily. Ser/Thr protein kinase family.

It is found in the cytoplasmic vesicle. The protein resides in the autophagosome. Its function is as follows. Serine/threonine protein kinase involved in autophagy. The ATG1-ATG13 protein kinase complex regulates downstream events required for autophagosome enclosure and/or vacuolar delivery. This chain is Serine/threonine-protein kinase ATG1c, found in Arabidopsis thaliana (Mouse-ear cress).